Consider the following 666-residue polypeptide: Endogenous retrovirus group K member 10 Gag polyprotein (666 aa).

Gly-2 carries N-myristoyl glycine lipidation. The segment at 164 to 183 (EGKGPELMGPSESKPRGTSP) is disordered. 2 CCHC-type zinc fingers span residues 544–561 (GKCY…NCPV) and 580–597 (DLCP…QCRS). Positions 598-642 (KFDKNGQPLSGNEQRGQPQAPQQTGAFPIQPFVPQGFQGQQPPLS) are disordered. The span at 604–622 (QPLSGNEQRGQPQAPQQTG) shows a compositional bias: polar residues. The span at 624 to 640 (FPIQPFVPQGFQGQQPP) shows a compositional bias: low complexity.

The protein belongs to the beta type-B retroviral Gag protein family. HERV class-II K(HML-2) gag subfamily. In terms of processing, myristoylation is essential for retroviral assembly. Alteration of the glycine residue leads to a block in the budding of particles and an accumulation of Gag inside the cell. Specific enzymatic cleavages may yield mature proteins.

The protein resides in the cell membrane. In terms of biological role, the products of the Gag polyproteins of infectious retroviruses perform highly complex orchestrated tasks during the assembly, budding, maturation, and infection stages of the viral replication cycle. During viral assembly, the proteins form membrane associations and self-associations that ultimately result in budding of an immature virion from the infected cell. Gag precursors also function during viral assembly to selectively bind and package two plus strands of genomic RNA. Endogenous Gag proteins may have kept, lost or modified their original function during evolution. The sequence is that of Endogenous retrovirus group K member 10 Gag polyprotein (ERVK-10) from Homo sapiens (Human).